We begin with the raw amino-acid sequence, 128 residues long: Large ribosomal subunit protein bL12 (128 aa).

This sequence belongs to the bacterial ribosomal protein bL12 family. In terms of assembly, homodimer. Part of the ribosomal stalk of the 50S ribosomal subunit. Forms a multimeric L10(L12)X complex, where L10 forms an elongated spine to which 2 to 4 L12 dimers bind in a sequential fashion. Binds GTP-bound translation factors.

Forms part of the ribosomal stalk which helps the ribosome interact with GTP-bound translation factors. Is thus essential for accurate translation. This is Large ribosomal subunit protein bL12 from Kocuria rhizophila (strain ATCC 9341 / DSM 348 / NBRC 103217 / DC2201).